A 67-amino-acid chain; its full sequence is Ranatuerin-2Vb (67 aa).

The first 22 residues, 1-22 (MFTLKKSFLLLFFLGTITLSLC), serve as a signal peptide directing secretion. Residues 23 to 39 (EEERGADDDDGEEEVKR) constitute a propeptide that is removed on maturation. C62 and C67 form a disulfide bridge.

As to expression, expressed by the skin glands.

Its subcellular location is the secreted. Antimicrobial peptide. The polypeptide is Ranatuerin-2Vb (Odorrana versabilis (Chinese bamboo leaf odorous frog)).